A 79-amino-acid chain; its full sequence is Sec-independent protein translocase protein TatA (79 aa).

Residues 1–21 (MGGWSSPSHWLIILLIVVLLF) traverse the membrane as a helical segment. The segment covering 49–61 (EVAKNTQKIEENK) has biased composition (basic and acidic residues). The tract at residues 49 to 79 (EVAKNTQKIEENKNTTNNTNADASIDETKKA) is disordered.

The protein belongs to the TatA/E family. As to quaternary structure, the Tat system comprises two distinct complexes: a TatABC complex, containing multiple copies of TatA, TatB and TatC subunits, and a separate TatA complex, containing only TatA subunits. Substrates initially bind to the TatABC complex, which probably triggers association of the separate TatA complex to form the active translocon.

It is found in the cell inner membrane. Functionally, part of the twin-arginine translocation (Tat) system that transports large folded proteins containing a characteristic twin-arginine motif in their signal peptide across membranes. TatA could form the protein-conducting channel of the Tat system. The sequence is that of Sec-independent protein translocase protein TatA from Campylobacter jejuni subsp. doylei (strain ATCC BAA-1458 / RM4099 / 269.97).